A 462-amino-acid chain; its full sequence is Fumarate hydratase class II (462 aa).

Residues 97–99 (SGT), 127–130 (HPND), 137–139 (SSN), and T185 contribute to the substrate site. The Proton donor/acceptor role is filled by H186. S316 is a catalytic residue. Residues S317 and 322–324 (KVN) each bind substrate.

The protein belongs to the class-II fumarase/aspartase family. Fumarase subfamily. In terms of assembly, homotetramer.

It localises to the cytoplasm. It catalyses the reaction (S)-malate = fumarate + H2O. Its pathway is carbohydrate metabolism; tricarboxylic acid cycle; (S)-malate from fumarate: step 1/1. Involved in the TCA cycle. Catalyzes the stereospecific interconversion of fumarate to L-malate. This chain is Fumarate hydratase class II, found in Halalkalibacterium halodurans (strain ATCC BAA-125 / DSM 18197 / FERM 7344 / JCM 9153 / C-125) (Bacillus halodurans).